The following is a 115-amino-acid chain: Probable non-functional T cell receptor beta variable 7-3 (115 aa).

A signal peptide spans 1–21; that stretch reads MGTRLLCWAALCLLGADHTGA. The 94-residue stretch at 22–115 folds into the Ig-like domain; the sequence is GVSQTPSNKV…SAAYLRASSL (94 aa).

Most probably, the alpha-beta TR is not assembled due to incorrect folding of the beta chain. Alpha-beta TR is a heterodimer composed of an alpha and beta chain; disulfide-linked. The alpha-beta TR is associated with the transmembrane signaling CD3 coreceptor proteins to form the TR-CD3 (TcR or TCR). The assembly of alpha-beta TR heterodimers with CD3 occurs in the endoplasmic reticulum where a single alpha-beta TR heterodimer associates with one CD3D-CD3E heterodimer, one CD3G-CD3E heterodimer and one CD247 homodimer forming a stable octameric structure. CD3D-CD3E and CD3G-CD3E heterodimers preferentially associate with TR alpha and TR beta chains, respectively. The association of the CD247 homodimer is the last step of TcR assembly in the endoplasmic reticulum and is required for transport to the cell surface.

Its subcellular location is the cell membrane. Its function is as follows. Probable non-functional open reading frame (ORF) of V region of the variable domain of T cell receptor (TR) beta chain. Non-functional ORF generally cannot participate in the synthesis of a productive T cell receptor (TR) chain due to altered V-(D)-J or switch recombination and/or splicing site (at mRNA level) and/or conserved amino acid change (protein level). Alpha-beta T cell receptors are antigen specific receptors which are essential to the immune response and are present on the cell surface of T lymphocytes. Recognize peptide-major histocompatibility (MH) (pMH) complexes that are displayed by antigen presenting cells (APC), a prerequisite for efficient T cell adaptive immunity against pathogens. Binding of alpha-beta TR to pMH complex initiates TR-CD3 clustering on the cell surface and intracellular activation of LCK that phosphorylates the ITAM motifs of CD3G, CD3D, CD3E and CD247 enabling the recruitment of ZAP70. In turn ZAP70 phosphorylates LAT, which recruits numerous signaling molecules to form the LAT signalosome. The LAT signalosome propagates signal branching to three major signaling pathways, the calcium, the mitogen-activated protein kinase (MAPK) kinase and the nuclear factor NF-kappa-B (NF-kB) pathways, leading to the mobilization of transcription factors that are critical for gene expression and essential for T cell growth and differentiation. The T cell repertoire is generated in the thymus, by V-(D)-J rearrangement. This repertoire is then shaped by intrathymic selection events to generate a peripheral T cell pool of self-MH restricted, non-autoaggressive T cells. Post-thymic interaction of alpha-beta TR with the pMH complexes shapes TR structural and functional avidity. The sequence is that of Probable non-functional T cell receptor beta variable 7-3 from Homo sapiens (Human).